We begin with the raw amino-acid sequence, 287 residues long: Elongation factor Ts (287 aa).

Residues 80–83 form an involved in Mg(2+) ion dislocation from EF-Tu region; it reads TDFL.

Belongs to the EF-Ts family.

It localises to the cytoplasm. Functionally, associates with the EF-Tu.GDP complex and induces the exchange of GDP to GTP. It remains bound to the aminoacyl-tRNA.EF-Tu.GTP complex up to the GTP hydrolysis stage on the ribosome. The polypeptide is Elongation factor Ts (Pseudomonas fluorescens (strain Pf0-1)).